The following is a 136-amino-acid chain: Keratin-associated protein 4-2 (136 aa).

Repeat copies occupy residues 5–9, 20–24, 25–29, 30–34, 35–39, 40–44, 45–49, 50–54, 55–59, 60–64, 65–69, 70–74, 75–79, 80–84, 90–94, 95–99, 100–104, 110–114, 120–124, and 125–129. Residues 5–129 form a 20 X 5 AA repeats OF C-C-[GRQVS]-[SPT]-[VSTQ] region; sequence CCGSVCSDQG…CCVSTCCRPT (125 aa).

It belongs to the KRTAP type 4 family. Interacts with hair keratins.

Its function is as follows. In the hair cortex, hair keratin intermediate filaments are embedded in an interfilamentous matrix, consisting of hair keratin-associated proteins (KRTAP), which are essential for the formation of a rigid and resistant hair shaft through their extensive disulfide bond cross-linking with abundant cysteine residues of hair keratins. The matrix proteins include the high-sulfur and high-glycine-tyrosine keratins. This chain is Keratin-associated protein 4-2 (KRTAP4-2), found in Homo sapiens (Human).